The sequence spans 571 residues: Septation ring formation regulator EzrA (571 aa).

The Extracellular portion of the chain corresponds to 1-3 (MYY). A helical transmembrane segment spans residues 4–22 (MLIGFIIVVIAVIGAGYIL). At 23–571 (KRKHYQRINE…ASKVSVDDIE (549 aa)) the chain is on the cytoplasmic side. 5 coiled-coil regions span residues 102–147 (ATNA…TKEK), 248–298 (LAQM…DTLE), 326–374 (DALA…ASGE), 400–437 (KFAE…ERER), and 478–529 (RIAE…ENHF).

The protein belongs to the EzrA family.

It localises to the cell membrane. Its function is as follows. Negative regulator of FtsZ ring formation; modulates the frequency and position of FtsZ ring formation. Inhibits FtsZ ring formation at polar sites. Interacts either with FtsZ or with one of its binding partners to promote depolymerization. The chain is Septation ring formation regulator EzrA from Listeria monocytogenes serotype 4a (strain HCC23).